Consider the following 311-residue polypeptide: 4-hydroxy-3-methylbut-2-enyl diphosphate reductase (311 aa).

Residue Cys12 participates in [4Fe-4S] cluster binding. Residues His41 and His74 each contribute to the (2E)-4-hydroxy-3-methylbut-2-enyl diphosphate site. Dimethylallyl diphosphate is bound by residues His41 and His74. The isopentenyl diphosphate site is built by His41 and His74. Residue Cys96 participates in [4Fe-4S] cluster binding. His124 contributes to the (2E)-4-hydroxy-3-methylbut-2-enyl diphosphate binding site. His124 lines the dimethylallyl diphosphate pocket. Residue His124 participates in isopentenyl diphosphate binding. Catalysis depends on Glu126, which acts as the Proton donor. Thr167 provides a ligand contact to (2E)-4-hydroxy-3-methylbut-2-enyl diphosphate. Position 197 (Cys197) interacts with [4Fe-4S] cluster. Ser225, Ser226, Asn227, and Ser269 together coordinate (2E)-4-hydroxy-3-methylbut-2-enyl diphosphate. Dimethylallyl diphosphate contacts are provided by Ser225, Ser226, Asn227, and Ser269. Residues Ser225, Ser226, Asn227, and Ser269 each contribute to the isopentenyl diphosphate site.

Belongs to the IspH family. The cofactor is [4Fe-4S] cluster.

It catalyses the reaction isopentenyl diphosphate + 2 oxidized [2Fe-2S]-[ferredoxin] + H2O = (2E)-4-hydroxy-3-methylbut-2-enyl diphosphate + 2 reduced [2Fe-2S]-[ferredoxin] + 2 H(+). It carries out the reaction dimethylallyl diphosphate + 2 oxidized [2Fe-2S]-[ferredoxin] + H2O = (2E)-4-hydroxy-3-methylbut-2-enyl diphosphate + 2 reduced [2Fe-2S]-[ferredoxin] + 2 H(+). Its pathway is isoprenoid biosynthesis; dimethylallyl diphosphate biosynthesis; dimethylallyl diphosphate from (2E)-4-hydroxy-3-methylbutenyl diphosphate: step 1/1. The protein operates within isoprenoid biosynthesis; isopentenyl diphosphate biosynthesis via DXP pathway; isopentenyl diphosphate from 1-deoxy-D-xylulose 5-phosphate: step 6/6. In terms of biological role, catalyzes the conversion of 1-hydroxy-2-methyl-2-(E)-butenyl 4-diphosphate (HMBPP) into a mixture of isopentenyl diphosphate (IPP) and dimethylallyl diphosphate (DMAPP). Acts in the terminal step of the DOXP/MEP pathway for isoprenoid precursor biosynthesis. This Aeromonas salmonicida (strain A449) protein is 4-hydroxy-3-methylbut-2-enyl diphosphate reductase.